The chain runs to 465 residues: GTPase Der (465 aa).

EngA-type G domains are found at residues 27–190 and 202–375; these read PVLA…PEAP and RRIA…AGWE. GTP contacts are provided by residues 33–40, 80–84, 142–145, 208–215, 255–259, and 320–323; these read GRPNVGKS, DTGGW, NKVD, DTAGI, and NKWD. One can recognise a KH-like domain in the interval 376–458; that stretch reads TRVPTGRLNA…PIHISVRVRE (83 aa).

It belongs to the TRAFAC class TrmE-Era-EngA-EngB-Septin-like GTPase superfamily. EngA (Der) GTPase family. In terms of assembly, associates with the 50S ribosomal subunit.

Functionally, GTPase that plays an essential role in the late steps of ribosome biogenesis. This Streptomyces coelicolor (strain ATCC BAA-471 / A3(2) / M145) protein is GTPase Der.